A 109-amino-acid polypeptide reads, in one-letter code: MKHLAAYLLLGLGGNTSPSAADVKAVLTSVGIDADEDRLNKLISELEGKDIQQLIAEGSEKLASVPSGGAGGASGGAAAAGGAAEEAKEEEKEEEKEESDEDMGFGLFD.

The disordered stretch occupies residues 63 to 109 (ASVPSGGAGGASGGAAAAGGAAEEAKEEEKEEEKEESDEDMGFGLFD). Over residues 68-79 (GGAGGASGGAAA) the composition is skewed to gly residues. Over residues 91–103 (EKEEEKEESDEDM) the composition is skewed to acidic residues. Residue S99 is modified to Phosphoserine.

It belongs to the eukaryotic ribosomal protein P1/P2 family. P1 and P2 exist as dimers at the large ribosomal subunit.

Plays an important role in the elongation step of protein synthesis. In Fusarium culmorum, this protein is Large ribosomal subunit protein P2.